The following is a 125-amino-acid chain: Large ribosomal subunit protein eL31 (125 aa).

An N-acetylmethionine modification is found at methionine 1. Serine 15 is modified (phosphoserine). An N6-succinyllysine mark is found at lysine 55 and lysine 70. Lysine 75 carries the post-translational modification N6-acetyllysine; alternate. Lysine 75 is modified (N6-succinyllysine; alternate). Serine 98 carries the phosphoserine modification.

Belongs to the eukaryotic ribosomal protein eL31 family. In terms of assembly, component of the large ribosomal subunit.

Its subcellular location is the cytoplasm. Its function is as follows. Component of the large ribosomal subunit. The ribosome is a large ribonucleoprotein complex responsible for the synthesis of proteins in the cell. The polypeptide is Large ribosomal subunit protein eL31 (RPL31) (Pongo abelii (Sumatran orangutan)).